Reading from the N-terminus, the 70-residue chain is Brevinin-1S (70 aa).

A signal peptide spans 1-22; the sequence is MFTLKKSLLLLFFLGTINLSLC. The propeptide occupies 23 to 44; the sequence is EEERNAEEERRDDPEERDVEVE. Cysteine 64 and cysteine 70 form a disulfide bridge.

It belongs to the frog skin active peptide (FSAP) family. Brevinin subfamily. In terms of tissue distribution, expressed by the skin glands.

It is found in the secreted. In terms of biological role, antimicrobial peptide. This Odorrana schmackeri (Schmacker's frog) protein is Brevinin-1S.